Consider the following 503-residue polypeptide: Probable protein kinase UbiB (503 aa).

A helical transmembrane segment spans residues 13–35 (TFYRYRLAGLCASLMGSGWICAL). Residues 120-491 (EFETEPIASA…QQRQSLWLAV (372 aa)) enclose the Protein kinase domain. ATP-binding positions include 126–134 (IASASIAQV) and Lys-148. The Proton acceptor role is filled by Asp-283. A helical transmembrane segment spans residues 485–502 (QSLWLAVIAVVLLLILLL).

This sequence belongs to the ABC1 family. UbiB subfamily.

The protein localises to the cell inner membrane. Its pathway is cofactor biosynthesis; ubiquinone biosynthesis [regulation]. Is probably a protein kinase regulator of UbiI activity which is involved in aerobic coenzyme Q (ubiquinone) biosynthesis. In Neisseria meningitidis serogroup B (strain ATCC BAA-335 / MC58), this protein is Probable protein kinase UbiB.